Consider the following 437-residue polypeptide: Trigger factor (437 aa).

The 86-residue stretch at 163–248 (SDRVIIDFEG…LNNVSEATLP (86 aa)) folds into the PPIase FKBP-type domain.

Belongs to the FKBP-type PPIase family. Tig subfamily.

It localises to the cytoplasm. It carries out the reaction [protein]-peptidylproline (omega=180) = [protein]-peptidylproline (omega=0). Its function is as follows. Involved in protein export. Acts as a chaperone by maintaining the newly synthesized protein in an open conformation. Functions as a peptidyl-prolyl cis-trans isomerase. The polypeptide is Trigger factor (Neisseria meningitidis serogroup C / serotype 2a (strain ATCC 700532 / DSM 15464 / FAM18)).